Here is a 137-residue protein sequence, read N- to C-terminus: Bombinin-like peptides 2 (137 aa).

The signal sequence occupies residues 1–18 (MNFKYIVAVSILIASAYA). An Asparagine amide modification is found at Asn-70. The tract at residues 92–112 (DSLEHPEEASEKETRGFNQEE) is disordered. Isoleucine amide is present on Ile-136.

The protein belongs to the bombinin family. In terms of tissue distribution, expressed by the skin glands.

The protein resides in the secreted. In terms of biological role, bombinin-like peptide 2 has antimicrobial activity, but no hemolytic activity. Preliminary evidence indicates that this peptide does not lyse and thus kill the bacteria by its antimicrobial activity. Functionally, bombinin H2 has antibacterial and hemolytic activity. This chain is Bombinin-like peptides 2, found in Bombina variegata (Yellow-bellied toad).